Here is a 496-residue protein sequence, read N- to C-terminus: MLKIKLEKTTFENAKAECSLVFIVNKDFSHAWVKNKELLETFKYEGEGVFLDQENKILYAGVKEDDVHLLRESACLAVRTLKKLAFKSVKVGVYTCGTHSKDNALLENLKALFLGLKLGLYEYDTFKSNKKESVLKEAIVALELHKPCEKTCANSLEKSAKEALKYAEIMTESLNIVRDLVNTPPMIGTPVYMAEVAQKVAKENHLEIHVYDEKFLEEKKMNAFLAVNKASLGVNPPRLIHLVYKPKKAKKKIALVGKGLTYDCGGLSLKPADYMVTMKADKGGGSAVIGLLNVLAKLGVEAEVHGIIGATENMIGPAAYKPDDILISKEGKSIEVRNTDAEGRLVLADCLSYAQDLNPDVIVDFATLTGACVVGLGEFTSAIMGHNEELKNLFETSGLESGELLAKLPFNRHLKKLIESKIADVCNISSSRYGGAITAGLFLNEFIRDEFKDKWLHIDIAGPAYVEKEWDVNSFGASGAGVRACTAFVEELLKKA.

Positions 258 and 263 each coordinate Mn(2+). Residue K270 is part of the active site. Positions 281, 340, and 342 each coordinate Mn(2+). R344 is a catalytic residue.

The protein belongs to the peptidase M17 family. It depends on Mn(2+) as a cofactor.

It is found in the cytoplasm. The catalysed reaction is Release of an N-terminal amino acid, Xaa-|-Yaa-, in which Xaa is preferably Leu, but may be other amino acids including Pro although not Arg or Lys, and Yaa may be Pro. Amino acid amides and methyl esters are also readily hydrolyzed, but rates on arylamides are exceedingly low.. The enzyme catalyses Release of an N-terminal amino acid, preferentially leucine, but not glutamic or aspartic acids.. Presumably involved in the processing and regular turnover of intracellular proteins. Catalyzes the removal of unsubstituted N-terminal amino acids from various peptides. The chain is Probable cytosol aminopeptidase from Helicobacter pylori (strain G27).